Reading from the N-terminus, the 218-residue chain is Pyridoxal phosphate homeostasis protein (218 aa).

Lys-25 is subject to N6-(pyridoxal phosphate)lysine.

This sequence belongs to the pyridoxal phosphate-binding protein YggS/PROSC family.

Functionally, pyridoxal 5'-phosphate (PLP)-binding protein, which is involved in PLP homeostasis. The chain is Pyridoxal phosphate homeostasis protein from Synechocystis sp. (strain ATCC 27184 / PCC 6803 / Kazusa).